The sequence spans 191 residues: LHFPL tetraspan subfamily member 7 protein (191 aa).

The next 4 membrane-spanning stretches (helical) occupy residues 6–26, 72–92, 112–132, and 154–174; these read MGSL…FSLM, IAAV…VLVL, YAQI…PFNL, and LGWG…LPFI.

The protein belongs to the TMEM211 family.

Its subcellular location is the membrane. This chain is LHFPL tetraspan subfamily member 7 protein (lhfpl7), found in Xenopus tropicalis (Western clawed frog).